Reading from the N-terminus, the 340-residue chain is MEF2 transcription factor homolog (340 aa).

Residues 1–61 form the MADS-box domain; it reads MGRKKIQITR…NKLFQYASTD (61 aa). 4 disordered regions span residues 90–112, 193–217, 258–283, and 312–340; these read RKEGNQGGGNSDDESPGPSTSPV, NQRNDPLSSTSVAPSSSSSKHLDFP, LQQRPVSQPAPSISNSSTNGISNGTS, and PNTYVKMEPHSPPEKRPRITTEWRPQQLT. Over residues 200–211 the composition is skewed to low complexity; the sequence is SSTSVAPSSSSS. Residues 258-268 show a composition bias toward polar residues; it reads LQQRPVSQPAP. The segment covering 269-283 has biased composition (low complexity); it reads SISNSSTNGISNGTS. The segment covering 318-332 has biased composition (basic and acidic residues); sequence MEPHSPPEKRPRITT.

Belongs to the MEF2 family. As to quaternary structure, interacts with histone deacetylase hda-4 isoform b.

Its subcellular location is the nucleus. Functionally, transcription regulator. Binds specifically to the MEF2 element, 5'-[TC]TA[AT][AT][AT][AT]TA[AG]-3' in the regulatory elements of target genes, such as chemoreceptors str-1 and srh-234. Involved in transduction of sensory signals, together with egl-4, kin-29 and hda-4; binding to histone deacetylase hda-4 enables negative modulation of chemoreceptor gene expression in chemosensory neurons. In response to starvation, negatively modulates expression of chemoreceptor srh-234 in ADL sensory neurons, acting in concert with basic helix-loop-helix (bHLH) transcription factors. Plays a role in regulating muscle sensitivity to acetylcholine (ACh) and the magnitude of presynaptic ACh release via a retrograde signal, perhaps by indirectly decreasing Ras-related protein Rab-3 activity. This is MEF2 transcription factor homolog from Caenorhabditis elegans.